A 62-amino-acid polypeptide reads, in one-letter code: Guanine nucleotide-binding protein subunit gamma (62 aa).

The tract at residues 40-62 is disordered; that stretch reads DMLVSGPTDQHNPFQEKKSCSVL. A compositionally biased stretch (basic and acidic residues) spans 53–62; sequence FQEKKSCSVL. At Cys59 the chain carries Cysteine methyl ester. Residue Cys59 is the site of S-geranylgeranyl cysteine attachment. Residues 60–62 constitute a propeptide, removed in mature form; that stretch reads SVL.

This sequence belongs to the G protein gamma family. In terms of assembly, g proteins are composed of 3 units, alpha, beta and gamma. Interacts with gpb-1 and gpb-2. Predominantly expressed in the central nervous system.

The protein resides in the cell membrane. In terms of biological role, guanine nucleotide-binding proteins (G proteins) are involved as a modulator or transducer in various transmembrane signaling systems. The beta and gamma chains are required for the GTPase activity, for replacement of GDP by GTP, and for G protein-effector interaction. The sequence is that of Guanine nucleotide-binding protein subunit gamma (gpc-1) from Caenorhabditis elegans.